A 543-amino-acid chain; its full sequence is MRPVGSKYLLEEPLGRGATGTVWRARQRETAGAEAAVAGQPGETVAIKVLKEELASDADIVMRFLRERSVLLRLTHPNIVRVRDLVVEGELLALVMDLIDGPDLHRYLRENGPLTPVAAALLTAQIADALAASHADGVVHRDLKPANVLLKQTGGEMHPMLTDFGIARLADSPGLTRTHEFVGTPAYVAPESAEGRPQTSAVDVYGAGILLYELVTGRPPFGGGSALEVLHQHLSAEPRRPSTVPDPLWTVIERCLRKNPDDRPSAENLARGLRVVAEGIGVHANSAQIGAAENVGALLAPDPAPAQVPGAPDAAYDPNGATSVLPHTSGPAGAADPTAVLPSTGAPDPTAVMPPVPPGQPGAPGQGGPEDPHPWQNQLRAARDRNEQTQVQYLDPNQDPLRRRPQRQVSRPPQQPRQAPQGPPPQQPGYGYPQQQQPQRYATPQPQQPQRYAPPPAPEPQQPRREPRPPRQRSANPMRIPGLGCLKGCLVTVVVLFVAGWLVWELSPLQEWIGTGKGYWDQLTDWFTTVTDWIGDLGGSGGG.

The Protein kinase domain occupies 8 to 276 (YLLEEPLGRG…ENLARGLRVV (269 aa)). ATP contacts are provided by residues 14 to 22 (LGRGATGTV) and Lys-48. The active-site Proton acceptor is the Asp-142. The segment at 303-480 (PAPAQVPGAP…RQRSANPMRI (178 aa)) is disordered. The segment covering 352-361 (VMPPVPPGQP) has biased composition (pro residues). Low complexity-rich tracts occupy residues 407–420 (RQVS…RQAP) and 428–451 (PGYG…QPQR). Positions 452–461 (YAPPPAPEPQ) are enriched in pro residues.

Belongs to the protein kinase superfamily. Ser/Thr protein kinase family. Autophosphorylated mainly at Thr and slightly at Ser.

It catalyses the reaction L-seryl-[protein] + ATP = O-phospho-L-seryl-[protein] + ADP + H(+). The catalysed reaction is L-threonyl-[protein] + ATP = O-phospho-L-threonyl-[protein] + ADP + H(+). This chain is Serine/threonine-protein kinase PkaA (pkaA), found in Streptomyces coelicolor (strain ATCC BAA-471 / A3(2) / M145).